Reading from the N-terminus, the 127-residue chain is Odontogenesis-associated phosphoprotein (127 aa).

Positions 1–23 (MAPGFHFSWLLVSWLVVTTVKGQ) are cleaved as a signal peptide.

As to expression, expressed in enamel organs and not expressed in the heart, kidney, or spleen.

Its subcellular location is the secreted. May promote nucleation of hydroxyapatite. The chain is Odontogenesis-associated phosphoprotein from Rattus norvegicus (Rat).